A 301-amino-acid polypeptide reads, in one-letter code: Nucleotide-binding protein Rfer_1653 (301 aa).

G15–S22 is an ATP binding site. D64 to T67 lines the GTP pocket.

Belongs to the RapZ-like family.

Functionally, displays ATPase and GTPase activities. The chain is Nucleotide-binding protein Rfer_1653 from Albidiferax ferrireducens (strain ATCC BAA-621 / DSM 15236 / T118) (Rhodoferax ferrireducens).